The primary structure comprises 595 residues: Probable L-gulonolactone oxidase 1 (595 aa).

A signal peptide spans 1 to 18 (MAFWLSLIFFCFCTFASS). The FAD-binding PCMH-type domain maps to 47–229 (SICEAAKVEY…SQVTFQLQPM (183 aa)).

Belongs to the oxygen-dependent FAD-linked oxidoreductase family. FAD serves as cofactor.

It carries out the reaction L-gulono-1,4-lactone + O2 = L-ascorbate + H2O2 + H(+). It participates in cofactor biosynthesis; L-ascorbate biosynthesis. Its function is as follows. May be involved in the biosynthesis of ascorbic acid. This Arabidopsis thaliana (Mouse-ear cress) protein is Probable L-gulonolactone oxidase 1.